The chain runs to 306 residues: ATP-dependent (S)-NAD(P)H-hydrate dehydratase (306 aa).

Residues 4–300 (LIDLFKPMIP…NQISNGFEDL (297 aa)) enclose the YjeF C-terminal domain. Residues glycine 104 and 157-163 (NFVEFKS) contribute to the (6S)-NADPHX site. Residues 197 to 201 (KGKED) and 216 to 225 (GMPRRCGGQG) contribute to the ATP site. Aspartate 226 is a (6S)-NADPHX binding site.

This sequence belongs to the NnrD/CARKD family. It depends on Mg(2+) as a cofactor.

The enzyme catalyses (6S)-NADHX + ATP = ADP + phosphate + NADH + H(+). It carries out the reaction (6S)-NADPHX + ATP = ADP + phosphate + NADPH + H(+). Functionally, catalyzes the dehydration of the S-form of NAD(P)HX at the expense of ATP, which is converted to ADP. Together with NAD(P)HX epimerase, which catalyzes the epimerization of the S- and R-forms, the enzyme allows the repair of both epimers of NAD(P)HX, a damaged form of NAD(P)H that is a result of enzymatic or heat-dependent hydration. This Dictyostelium discoideum (Social amoeba) protein is ATP-dependent (S)-NAD(P)H-hydrate dehydratase.